Consider the following 634-residue polypeptide: Formate--tetrahydrofolate ligase (634 aa).

78–85 lines the ATP pocket; that stretch reads TPLGEGKS.

This sequence belongs to the formate--tetrahydrofolate ligase family. As to quaternary structure, homodimer.

It catalyses the reaction (6S)-5,6,7,8-tetrahydrofolate + formate + ATP = (6R)-10-formyltetrahydrofolate + ADP + phosphate. The protein operates within one-carbon metabolism; tetrahydrofolate interconversion. This chain is Formate--tetrahydrofolate ligase (THFS), found in Arabidopsis thaliana (Mouse-ear cress).